We begin with the raw amino-acid sequence, 238 residues long: Transcriptional repressor ThaA (238 aa).

The HTH luxR-type domain maps to 169-234 (IPGEIARVSL…HAAVKATLVG (66 aa)). A DNA-binding region (H-T-H motif) is located at residues 193–212 (VSEISSILQMSVRNINFHIQ).

Belongs to the autoinducer-regulated transcriptional regulatory protein family.

In terms of biological role, represses thailandamide production. The protein is Transcriptional repressor ThaA of Burkholderia thailandensis (strain ATCC 700388 / DSM 13276 / CCUG 48851 / CIP 106301 / E264).